The primary structure comprises 603 residues: Serine/threonine-protein kinase HAL4/SAT4 (603 aa).

Composition is skewed to polar residues over residues 1-15, 30-60, and 68-85; these read MTGM…PQQT, RSGS…SASK, and TPTT…NTAG. Disordered stretches follow at residues 1–86, 150–171, and 267–301; these read MTGM…TAGV, LSPK…PTPT, and DKYP…THNI. Low complexity predominate over residues 159–171; the sequence is NSNTAITPAPTPT. Basic and acidic residues predominate over residues 282-296; the sequence is PERDIYRSDQKDSKN. In terms of domain architecture, Protein kinase spans 316 to 590; it reads GRCQEVLGKG…GKQILNSEWG (275 aa). ATP is bound by residues 322–330 and Lys353; that span reads LGKGAFGVV. The active-site Proton acceptor is the Asp449.

It belongs to the protein kinase superfamily. Ser/Thr protein kinase family.

The enzyme catalyses L-seryl-[protein] + ATP = O-phospho-L-seryl-[protein] + ADP + H(+). It carries out the reaction L-threonyl-[protein] + ATP = O-phospho-L-threonyl-[protein] + ADP + H(+). Its function is as follows. Promotes K(+) uptake, by the potassium transporter TRK1-TRK2, which leads to the subsequent cellular resistance to toxic cations such as Na(+), Li(+) and Ca(2+). In Saccharomyces cerevisiae (strain ATCC 204508 / S288c) (Baker's yeast), this protein is Serine/threonine-protein kinase HAL4/SAT4 (SAT4).